We begin with the raw amino-acid sequence, 46 residues long: Large ribosomal subunit protein bL34c (46 aa).

The segment at 1–46 (MSKRTLEGSHRKKVRKSGFLSRSQSPTGRRILKARRKKGRKMLVKY) is disordered. Positions 30–46 (RILKARRKKGRKMLVKY) are enriched in basic residues.

The protein belongs to the bacterial ribosomal protein bL34 family.

Its subcellular location is the plastid. The protein localises to the cyanelle. This chain is Large ribosomal subunit protein bL34c (rpl34), found in Cyanophora paradoxa.